Consider the following 61-residue polypeptide: Small ribosomal subunit protein uS14 (61 aa).

4 residues coordinate Zn(2+): cysteine 24, cysteine 27, cysteine 40, and cysteine 43.

Belongs to the universal ribosomal protein uS14 family. Zinc-binding uS14 subfamily. In terms of assembly, part of the 30S ribosomal subunit. Contacts proteins S3 and S10. It depends on Zn(2+) as a cofactor.

Functionally, binds 16S rRNA, required for the assembly of 30S particles and may also be responsible for determining the conformation of the 16S rRNA at the A site. This is Small ribosomal subunit protein uS14 from Desulfatibacillum aliphaticivorans.